Consider the following 87-residue polypeptide: DNA-directed RNA polymerase subunit omega (87 aa).

The protein belongs to the RNA polymerase subunit omega family. In terms of assembly, the RNAP catalytic core consists of 2 alpha, 1 beta, 1 beta' and 1 omega subunit. When a sigma factor is associated with the core the holoenzyme is formed, which can initiate transcription.

It carries out the reaction RNA(n) + a ribonucleoside 5'-triphosphate = RNA(n+1) + diphosphate. Promotes RNA polymerase assembly. Latches the N- and C-terminal regions of the beta' subunit thereby facilitating its interaction with the beta and alpha subunits. The chain is DNA-directed RNA polymerase subunit omega from Pseudomonas putida (strain W619).